A 59-amino-acid chain; its full sequence is Embryonic testis differentiation protein homolog C (59 aa).

Residues M1–K22 are disordered.

This is Embryonic testis differentiation protein homolog C from Homo sapiens (Human).